Here is a 309-residue protein sequence, read N- to C-terminus: High-affinity zinc uptake system protein AztC (309 aa).

Residues 1–24 (MKDWLFRIATCSIMTFSSLAAAQA) form the signal peptide. His61 contacts Zn(2+). The interval 117–132 (GGGHYHYIDGKAVFHA) is D-loop. His138 contributes to the Zn(2+) binding site. A disulfide bond links Cys158 and Cys165. His204 is a Zn(2+) binding site. Residues 222-229 (QGVSTESE) are Z-loop. Residue Asp279 participates in Zn(2+) binding.

It belongs to the bacterial solute-binding protein 9 family. Monomer.

The protein localises to the periplasm. In terms of biological role, part of the ATP-binding cassette (ABC) transport system AztABCD involved in zinc import. Binds zinc with high affinity and specificity and delivers it to the membrane permease for translocation into the cytoplasm. In Paracoccus denitrificans (strain Pd 1222), this protein is High-affinity zinc uptake system protein AztC.